The chain runs to 507 residues: Ribonuclease Y (507 aa).

A helical transmembrane segment spans residues 1–21 (MLWYIVAGAGGLLIGYLIASY). The KH domain maps to 197–282 (TVSTVSLPSD…EMYEKAKQEV (86 aa)). In terms of domain architecture, HD spans 323–416 (VLNHSIEVAL…VAAADALSAA (94 aa)).

Belongs to the RNase Y family.

The protein resides in the cell membrane. Endoribonuclease that initiates mRNA decay. The polypeptide is Ribonuclease Y (Thermotoga petrophila (strain ATCC BAA-488 / DSM 13995 / JCM 10881 / RKU-1)).